The primary structure comprises 217 residues: tRNA (guanine-N(7)-)-methyltransferase (217 aa).

The S-adenosyl-L-methionine site is built by Glu-44, Glu-69, Asp-96, and Asp-118. Asp-118 is a catalytic residue. Lys-122 is a binding site for substrate. Positions 124–129 are interaction with RNA; it reads RHEKRR. Substrate contacts are provided by residues Asp-154 and 191–194; that span reads TEYE.

The protein belongs to the class I-like SAM-binding methyltransferase superfamily. TrmB family.

The enzyme catalyses guanosine(46) in tRNA + S-adenosyl-L-methionine = N(7)-methylguanosine(46) in tRNA + S-adenosyl-L-homocysteine. It functions in the pathway tRNA modification; N(7)-methylguanine-tRNA biosynthesis. In terms of biological role, catalyzes the formation of N(7)-methylguanine at position 46 (m7G46) in tRNA. The sequence is that of tRNA (guanine-N(7)-)-methyltransferase from Bacillus velezensis (strain DSM 23117 / BGSC 10A6 / LMG 26770 / FZB42) (Bacillus amyloliquefaciens subsp. plantarum).